Reading from the N-terminus, the 214-residue chain is 3,4-dihydroxy-2-butanone 4-phosphate synthase (214 aa).

Residues 37–38, aspartate 42, 150–154, and glutamate 174 contribute to the D-ribulose 5-phosphate site; these read RE and RRGHT. Glutamate 38 provides a ligand contact to Mg(2+). Mg(2+) is bound at residue histidine 153.

Belongs to the DHBP synthase family. In terms of assembly, homodimer. It depends on Mg(2+) as a cofactor. Requires Mn(2+) as cofactor.

It carries out the reaction D-ribulose 5-phosphate = (2S)-2-hydroxy-3-oxobutyl phosphate + formate + H(+). It functions in the pathway cofactor biosynthesis; riboflavin biosynthesis; 2-hydroxy-3-oxobutyl phosphate from D-ribulose 5-phosphate: step 1/1. In terms of biological role, catalyzes the conversion of D-ribulose 5-phosphate to formate and 3,4-dihydroxy-2-butanone 4-phosphate. This chain is 3,4-dihydroxy-2-butanone 4-phosphate synthase, found in Desulfotalea psychrophila (strain LSv54 / DSM 12343).